The chain runs to 373 residues: NADPH-dependent 3-keto-steroid reductase Hsd3b5 (373 aa).

NADP(+) is bound by residues 10–15, Tyr-155, and Lys-159; that span reads GAGGFL. The active-site Proton donor is the Lys-159. Residues 288–308 traverse the membrane as a helical segment; it reads LSLLYWLAFLLETVSFLLRPV. Lys-350 carries the post-translational modification N6-acetyllysine.

Belongs to the 3-beta-HSD family. Expressed in the male liver, starting in late puberty.

The protein localises to the endoplasmic reticulum membrane. It localises to the mitochondrion membrane. It catalyses the reaction a 3beta-hydroxysteroid + NADP(+) = a 3-oxosteroid + NADPH + H(+). The enzyme catalyses 5alpha-androstane-3beta,17beta-diol + NADP(+) = 17beta-hydroxy-5alpha-androstan-3-one + NADPH + H(+). Its pathway is steroid metabolism. Responsible for the reduction of the oxo group on the C-3 of 5alpha-androstane steroids. Catalyzes the conversion of dihydrotestosterone to its inactive form 5alpha-androstanediol, that does not bind androgen receptor/AR. Does not function as an isomerase. This chain is NADPH-dependent 3-keto-steroid reductase Hsd3b5, found in Mus musculus (Mouse).